An 857-amino-acid polypeptide reads, in one-letter code: DNA mismatch repair protein MutS (857 aa).

Gly621–Ser628 provides a ligand contact to ATP.

It belongs to the DNA mismatch repair MutS family.

Its function is as follows. This protein is involved in the repair of mismatches in DNA. It is possible that it carries out the mismatch recognition step. This protein has a weak ATPase activity. The sequence is that of DNA mismatch repair protein MutS from Francisella tularensis subsp. tularensis (strain SCHU S4 / Schu 4).